The primary structure comprises 304 residues: MTSTLPFVSVIIPVYNEAENIQKCLNAVTSQTYPKSKYEVLVVDNGSQDGTKEIARQFSTAYDNLEILIEDEQQGSYAARNTGIEQSSGAILAFLDGDCSPHQQWLERGVSTISGTGVDLVGGNVEFTYPNGGTAAERYDSFTNMQMKESISKRNVAKTVNLFVRQDVVEDVGPFPNHLISGGDVHWTKRATDAGYSLTFAHDVIGCHPARPFGELLKKQFRVGKGQIQVWMLDRISLRRVFALALWILVGFLPKPPHYLSQDLRRTGQTVTKAMFVRILVVAWCCRLAENAGRLSYILRSEEQ.

It belongs to the glycosyltransferase 2 family.

It localises to the cell membrane. It participates in cell surface structure biogenesis; S-layer biogenesis. In terms of biological role, involved in the assembly of a N-linked pentasaccharide that decorates the S-layer glycoprotein and flagellins. Catalyzes the addition to the dolichol phosphate carrier of the hexuronic acid found at position 4 of the pentasaccharide. The protein is Glycosyltransferase AglE (aglE) of Haloferax volcanii (strain ATCC 29605 / DSM 3757 / JCM 8879 / NBRC 14742 / NCIMB 2012 / VKM B-1768 / DS2) (Halobacterium volcanii).